The following is a 390-amino-acid chain: NADH-quinone oxidoreductase subunit D (390 aa).

The protein belongs to the complex I 49 kDa subunit family. In terms of assembly, NDH-1 is composed of 14 different subunits. Subunits NuoB, C, D, E, F, and G constitute the peripheral sector of the complex.

The protein localises to the cell membrane. The enzyme catalyses a quinone + NADH + 5 H(+)(in) = a quinol + NAD(+) + 4 H(+)(out). NDH-1 shuttles electrons from NADH, via FMN and iron-sulfur (Fe-S) centers, to quinones in the respiratory chain. The immediate electron acceptor for the enzyme in this species is believed to be ubiquinone. Couples the redox reaction to proton translocation (for every two electrons transferred, four hydrogen ions are translocated across the cytoplasmic membrane), and thus conserves the redox energy in a proton gradient. This is NADH-quinone oxidoreductase subunit D from Wolbachia sp. subsp. Brugia malayi (strain TRS).